A 518-amino-acid polypeptide reads, in one-letter code: uncharacterized protein (518 aa).

ABC transporter domains are found at residues 4-260 (LSVK…QLEA) and 324-518 (LIFE…TKVL). ATP is bound by residues 36 to 43 (GANGEGKS) and 357 to 364 (GANGIGKT).

The protein belongs to the ABC transporter superfamily.

This is an uncharacterized protein from Bacillus subtilis (strain 168).